Consider the following 84-residue polypeptide: uncharacterized protein (84 aa).

Residues 8–47 (CECCDRDLPPDSGDAMICTFECTFCAGCAETKLGGTCPNC) form a cysteine motif region.

This is an uncharacterized protein from Rhizobium meliloti (strain 1021) (Ensifer meliloti).